The sequence spans 53 residues: uncharacterized protein (53 aa).

It is found in the mitochondrion matrix. It localises to the kinetoplast. This is an uncharacterized protein from Trypanosoma brucei brucei.